Consider the following 177-residue polypeptide: Copper-binding regulatory protein cuf2 (177 aa).

Positions 1–40 form a DNA-binding region, copper-fist; sequence MIIIDGKNYACVVCLRGHRGSSCQHQERALIEVRTRGRPL. Residues C11, C14, C23, and H25 each contribute to the Zn(2+) site.

Its subcellular location is the nucleus. In Schizosaccharomyces pombe (strain 972 / ATCC 24843) (Fission yeast), this protein is Copper-binding regulatory protein cuf2 (cuf2).